A 531-amino-acid polypeptide reads, in one-letter code: Zinc finger C2HC domain-containing protein 1C (531 aa).

The tract at residues 16–45 (MLPHNTTEAPGPHSAKQDSYEQSDSSQQSL) is disordered. The span at 35-44 (YEQSDSSQQS) shows a compositional bias: low complexity. Residues 209-264 (VQIRRLEAAGESLEEEIRRKQILLRGKLKKTEEELRRIQTQKEQAKENENRELQKI) adopt a coiled-coil conformation. 2 disordered regions span residues 290-318 (FEEEFSRDKREDETWERSQQNSSPFQLSD) and 334-387 (NKIR…PQLG). Residues 293-305 (EFSRDKREDETWE) show a composition bias toward basic and acidic residues. The segment covering 306–315 (RSQQNSSPFQ) has biased composition (polar residues). Basic and acidic residues predominate over residues 335–345 (KIRDRVSEPSM). Low complexity predominate over residues 366–380 (SSLSMAPDSSGSSGS). 2 C2HC/C3H-type zinc fingers span residues 385 to 414 (QLGECSHCGRKFLLFRLERHSNICSRMQGS) and 493 to 522 (DYIQCPHCSHHFAPKVAEQHIPKCKTIKNR). Positions 389, 392, 404, 408, 497, 500, 512, and 516 each coordinate Zn(2+).

It belongs to the ZC2HC1 family. Requires Zn(2+) as cofactor.

In Macaca fascicularis (Crab-eating macaque), this protein is Zinc finger C2HC domain-containing protein 1C (ZC2HC1C).